The chain runs to 220 residues: Small ribosomal subunit protein mS23 (220 aa).

This sequence belongs to the mitochondrion-specific ribosomal protein mS23 family. As to quaternary structure, component of the mitochondrial small ribosomal subunit (mt-SSU). Mature yeast 74S mitochondrial ribosomes consist of a small (37S) and a large (54S) subunit. The 37S small subunit contains a 15S ribosomal RNA (15S mt-rRNA) and at least 32 different proteins. The 54S large subunit contains a 21S rRNA (21S mt-rRNA) and at least 45 different proteins.

It is found in the mitochondrion. Its function is as follows. Component of the mitochondrial ribosome (mitoribosome), a dedicated translation machinery responsible for the synthesis of mitochondrial genome-encoded proteins, including at least some of the essential transmembrane subunits of the mitochondrial respiratory chain. The mitoribosomes are attached to the mitochondrial inner membrane and translation products are cotranslationally integrated into the membrane. This is Small ribosomal subunit protein mS23 (rsm25) from Schizosaccharomyces pombe (strain 972 / ATCC 24843) (Fission yeast).